The sequence spans 570 residues: Sulfite reductase [NADPH] hemoprotein beta-component (570 aa).

[4Fe-4S] cluster contacts are provided by cysteine 433, cysteine 439, cysteine 478, and cysteine 482. A siroheme-binding site is contributed by cysteine 482.

It belongs to the nitrite and sulfite reductase 4Fe-4S domain family. In terms of assembly, alpha(8)-beta(8). The alpha component is a flavoprotein, the beta component is a hemoprotein. It depends on siroheme as a cofactor. [4Fe-4S] cluster serves as cofactor.

The enzyme catalyses hydrogen sulfide + 3 NADP(+) + 3 H2O = sulfite + 3 NADPH + 4 H(+). It participates in sulfur metabolism; hydrogen sulfide biosynthesis; hydrogen sulfide from sulfite (NADPH route): step 1/1. Functionally, component of the sulfite reductase complex that catalyzes the 6-electron reduction of sulfite to sulfide. This is one of several activities required for the biosynthesis of L-cysteine from sulfate. In Aeromonas hydrophila subsp. hydrophila (strain ATCC 7966 / DSM 30187 / BCRC 13018 / CCUG 14551 / JCM 1027 / KCTC 2358 / NCIMB 9240 / NCTC 8049), this protein is Sulfite reductase [NADPH] hemoprotein beta-component.